Reading from the N-terminus, the 322-residue chain is tRNA dimethylallyltransferase (322 aa).

19-26 (GPTASGKT) serves as a coordination point for ATP. Residue 21–26 (TASGKT) participates in substrate binding. Interaction with substrate tRNA stretches follow at residues 44–47 (DSAL), 168–172 (QRIQR), and 255–260 (RCVGYR).

Belongs to the IPP transferase family. Monomer. Mg(2+) is required as a cofactor.

The catalysed reaction is adenosine(37) in tRNA + dimethylallyl diphosphate = N(6)-dimethylallyladenosine(37) in tRNA + diphosphate. Functionally, catalyzes the transfer of a dimethylallyl group onto the adenine at position 37 in tRNAs that read codons beginning with uridine, leading to the formation of N6-(dimethylallyl)adenosine (i(6)A). This chain is tRNA dimethylallyltransferase, found in Cupriavidus necator (strain ATCC 17699 / DSM 428 / KCTC 22496 / NCIMB 10442 / H16 / Stanier 337) (Ralstonia eutropha).